The following is a 171-amino-acid chain: Protein FAM209A (171 aa).

The N-terminal stretch at M1–A19 is a signal peptide. At F20–T52 the chain is on the extracellular side. Residues Q53–L73 form a helical membrane-spanning segment. Over Q74 to S171 the chain is Cytoplasmic. The interval K81 to P107 is disordered. Residues N114–T139 are a coiled coil.

The protein belongs to the FAM209 family. In terms of assembly, interacts with DPY19L2. Interacts with CYLC1; the interaction may be relevant for proper acrosome attachment to the nuclear envelope.

Its subcellular location is the nucleus inner membrane. Its function is as follows. May play a role in sperm acrosome biogenesis. This is Protein FAM209A from Homo sapiens (Human).